A 302-amino-acid polypeptide reads, in one-letter code: UDP-N-acetylenolpyruvoylglucosamine reductase (302 aa).

The FAD-binding PCMH-type domain maps to 27–192 (KVGGAVDYLA…LSAKFALRPG (166 aa)). Residue arginine 171 is part of the active site. Catalysis depends on serine 221, which acts as the Proton donor. Glutamate 291 is an active-site residue.

This sequence belongs to the MurB family. FAD is required as a cofactor.

The protein localises to the cytoplasm. The enzyme catalyses UDP-N-acetyl-alpha-D-muramate + NADP(+) = UDP-N-acetyl-3-O-(1-carboxyvinyl)-alpha-D-glucosamine + NADPH + H(+). It functions in the pathway cell wall biogenesis; peptidoglycan biosynthesis. Functionally, cell wall formation. The chain is UDP-N-acetylenolpyruvoylglucosamine reductase from Streptococcus suis (strain 98HAH33).